We begin with the raw amino-acid sequence, 232 residues long: Phosphatidylserine decarboxylase proenzyme (232 aa).

The active-site Schiff-base intermediate with substrate; via pyruvic acid is the serine 190. Serine 190 carries the post-translational modification Pyruvic acid (Ser); by autocatalysis.

This sequence belongs to the phosphatidylserine decarboxylase family. PSD-A subfamily. In terms of assembly, heterodimer of a large membrane-associated beta subunit and a small pyruvoyl-containing alpha subunit. Requires pyruvate as cofactor. In terms of processing, is synthesized initially as an inactive proenzyme. Formation of the active enzyme involves a self-maturation process in which the active site pyruvoyl group is generated from an internal serine residue via an autocatalytic post-translational modification. Two non-identical subunits are generated from the proenzyme in this reaction, and the pyruvate is formed at the N-terminus of the alpha chain, which is derived from the carboxyl end of the proenzyme. The post-translation cleavage follows an unusual pathway, termed non-hydrolytic serinolysis, in which the side chain hydroxyl group of the serine supplies its oxygen atom to form the C-terminus of the beta chain, while the remainder of the serine residue undergoes an oxidative deamination to produce ammonia and the pyruvoyl prosthetic group on the alpha chain.

The protein resides in the cell membrane. The catalysed reaction is a 1,2-diacyl-sn-glycero-3-phospho-L-serine + H(+) = a 1,2-diacyl-sn-glycero-3-phosphoethanolamine + CO2. The protein operates within phospholipid metabolism; phosphatidylethanolamine biosynthesis; phosphatidylethanolamine from CDP-diacylglycerol: step 2/2. In terms of biological role, catalyzes the formation of phosphatidylethanolamine (PtdEtn) from phosphatidylserine (PtdSer). In Bradyrhizobium sp. (strain BTAi1 / ATCC BAA-1182), this protein is Phosphatidylserine decarboxylase proenzyme.